Reading from the N-terminus, the 435-residue chain is Trigger factor (435 aa).

One can recognise a PPIase FKBP-type domain in the interval 163 to 248 (GDYVTFDFKG…IKEIKVKELP (86 aa)).

Belongs to the FKBP-type PPIase family. Tig subfamily.

Its subcellular location is the cytoplasm. The enzyme catalyses [protein]-peptidylproline (omega=180) = [protein]-peptidylproline (omega=0). In terms of biological role, involved in protein export. Acts as a chaperone by maintaining the newly synthesized protein in an open conformation. Functions as a peptidyl-prolyl cis-trans isomerase. The chain is Trigger factor from Geotalea daltonii (strain DSM 22248 / JCM 15807 / FRC-32) (Geobacter daltonii).